The following is an 87-amino-acid chain: Beta-toxin Ct1a (87 aa).

The signal sequence occupies residues 1 to 19 (MNSLLMITACLALIGTVWA). The LCN-type CS-alpha/beta domain occupies 20 to 85 (KEGYLVNHST…VWPLPKKTCN (66 aa)). Cystine bridges form between C31–C84, C35–C60, C44–C65, and C48–C67. Asparagine amide is present on N85.

This sequence belongs to the long (4 C-C) scorpion toxin superfamily. Sodium channel inhibitor family. Beta subfamily. In terms of tissue distribution, expressed by the venom gland.

The protein localises to the secreted. Its function is as follows. Beta toxins bind voltage-independently at site-4 of sodium channels (Nav) and shift the voltage of activation toward more negative potentials thereby affecting sodium channel activation and promoting spontaneous and repetitive firing. Is lethal to mice but does not show toxicity to freshwater shrimp and crickets. The sequence is that of Beta-toxin Ct1a from Centruroides tecomanus (Scorpion).